Consider the following 665-residue polypeptide: Glycine--tRNA ligase beta subunit (665 aa).

This sequence belongs to the class-II aminoacyl-tRNA synthetase family. Tetramer of two alpha and two beta subunits.

Its subcellular location is the cytoplasm. The enzyme catalyses tRNA(Gly) + glycine + ATP = glycyl-tRNA(Gly) + AMP + diphosphate. The sequence is that of Glycine--tRNA ligase beta subunit (glyS) from Rickettsia prowazekii (strain Madrid E).